The following is a 402-amino-acid chain: TBC1 domain family member 20 (402 aa).

Positions 1 to 27 (MALRPSKGDGSAGRWDRGAGKADFNAK) are disordered. The span at 14–26 (RWDRGAGKADFNA) shows a compositional bias: basic and acidic residues. The 187-residue stretch at 59–245 (LLTDEIRCQV…RLYDFFLACH (187 aa)) folds into the Rab-GAP TBC domain. 2 helical membrane passes run 237–257 (LYDFFLACHPLMPIYFAAVIV) and 366–386 (FVKLAVMGLTVALGAAALAVV).

It is found in the membrane. GTPase-activating protein specific for Rab1 and Rab2 small GTPase families for which it can accelerate the intrinsic GTP hydrolysis rate by more than five orders of magnitude. Also shows GAP activity for RAB18 GTPase. Promotes RAB18 dissociation from the endoplasmic reticulum (ER) membrane into the cytosol, probably through stimulating RAB18 GTP-hydrolysis. Involved in maintaining endoplasmic reticulum structure. The chain is TBC1 domain family member 20 from Mus musculus (Mouse).